A 547-amino-acid chain; its full sequence is TBCC domain-containing protein 1 (547 aa).

The C-CAP/cofactor C-like domain occupies 304–435; the sequence is PHTHRMVVMS…LEDHMAQTGL (132 aa).

Belongs to the TBCC family.

It is found in the cytoplasm. Its subcellular location is the cytoskeleton. The protein localises to the microtubule organizing center. It localises to the centrosome. The protein resides in the spindle pole. In terms of biological role, may play a role in the regulation of centrosome and Golgi apparatus positioning. The polypeptide is TBCC domain-containing protein 1 (tbccd1) (Xenopus laevis (African clawed frog)).